A 515-amino-acid chain; its full sequence is 2,3-bisphosphoglycerate-independent phosphoglycerate mutase (515 aa).

Mn(2+)-binding residues include D14 and S64. The Phosphoserine intermediate role is filled by S64. Substrate-binding positions include H125, 155 to 156, R187, R193, 263 to 266, and K337; these read RD and RADR. Mn(2+)-binding residues include D404, H408, D445, H446, and H464.

This sequence belongs to the BPG-independent phosphoglycerate mutase family. Monomer. Mn(2+) serves as cofactor.

It carries out the reaction (2R)-2-phosphoglycerate = (2R)-3-phosphoglycerate. It participates in carbohydrate degradation; glycolysis; pyruvate from D-glyceraldehyde 3-phosphate: step 3/5. Functionally, catalyzes the interconversion of 2-phosphoglycerate and 3-phosphoglycerate. The sequence is that of 2,3-bisphosphoglycerate-independent phosphoglycerate mutase from Pseudomonas aeruginosa (strain UCBPP-PA14).